The following is a 486-amino-acid chain: Patatin-like phospholipase domain-containing protein 2 (486 aa).

At 1–8 (MFPKETTW) the chain is on the cytoplasmic side. A helical membrane pass occupies residues 9 to 29 (NISFAGCGFLGVYHIGVASCL). Residues 10–179 (ISFAGCGFLG…SDNLPLYELK (170 aa)) form the PNPLA domain. Residues 14-19 (GCGFLG) carry the GXGXXG motif. Residues 30-42 (REHAPFLVANATH) are Extracellular-facing. N-linked (GlcNAc...) asparagine glycosylation is present at Asn-39. The chain crosses the membrane as a helical span at residues 43 to 63 (IYGASAGALTATALVTGACLG). The short motif at 45–49 (GASAG) is the GXSXG element. The Nucleophile role is filled by Ser-47. Residues 64 to 137 (EAGANIIEVS…IITHFNSKEE (74 aa)) lie on the Cytoplasmic side of the membrane. Residue Lys-92 forms a Glycyl lysine isopeptide (Lys-Gly) (interchain with G-Cter in ubiquitin) linkage. A helical transmembrane segment spans residues 138 to 158 (LIQANVCSTFIPVYCGLIPPS). Residues 159–334 (LQGVRYVDGG…TTLSNMLPVR (176 aa)) are Extracellular-facing. Asp-166 acts as the Proton acceptor in catalysis. The DGA/G signature appears at 166–168 (DGG). The helical transmembrane segment at 335-355 (LAMAMMVPYTLPLESAVSFTI) threads the bilayer. The Cytoplasmic segment spans residues 356–486 (RLLEWLPDVP…PQHPPSSPPC (131 aa)). Ser-377 carries the post-translational modification Phosphoserine; in vitro. Ser-399 and Ser-409 each carry phosphoserine; by PKA. Position 433 is a phosphoserine; in vitro (Ser-433).

Interacts with ABHD5; this association stimulates PNPLA2 triglyceride hydrolase activity. Interacts with SERPINF1; this interaction stimulates the phospholipase A2 activity of PNPLA2. Despite a colocalization in lipid droplets, it probably does not interact with PLIN. Interacts with PLIN5; prevents interaction with ABHD5. Interacts with FAF2. Phosphorylation at Ser-409 by PKA is increased during fasting and moderate intensity exercise, and moderately increases lipolytic activity. In terms of processing, ubiquitinated by PEX2 in response to reactive oxygen species (ROS), leading to its degradation. Ubiquitination is stimulated by LDAH.

The protein resides in the lipid droplet. The protein localises to the cell membrane. It is found in the cytoplasm. The enzyme catalyses a triacylglycerol + H2O = a diacylglycerol + a fatty acid + H(+). It catalyses the reaction a triacylglycerol + H2O = a 1,2-diacylglycerol + a fatty acid + H(+). The catalysed reaction is a triacylglycerol + H2O = a 1,3-diacylglycerol + a fatty acid + H(+). It carries out the reaction a triacyl-sn-glycerol + H2O = a 1,3-diacyl-sn-glycerol + a fatty acid + H(+). The enzyme catalyses a triacyl-sn-glycerol + H2O = a 2,3-diacyl-sn-glycerol + a fatty acid + H(+). It catalyses the reaction a 1-acylglycerol + a 1,3-diacylglycerol = a triacylglycerol + glycerol. The catalysed reaction is a 1-acylglycerol + a 1,2-diacylglycerol = a triacylglycerol + glycerol. It carries out the reaction 2 a 1-acylglycerol = a 1,2-diacylglycerol + glycerol. The enzyme catalyses a triacylglycerol + all-trans-retinol = an all-trans-retinyl ester + a diacylglycerol. It catalyses the reaction 1,2-di-(9Z-octadecenoyl)-glycerol + (9Z)-octadecenoate + H(+) = 1,2,3-tri-(9Z-octadecenoyl)-glycerol + H2O. The catalysed reaction is 1,2,3-tri-(9Z-octadecenoyl)-glycerol + H2O = 1,3-di-(9Z-octadecenoyl)-glycerol + (9Z)-octadecenoate + H(+). It carries out the reaction 1-(9Z-octadecenoyl)-glycerol + 1,3-di-(9Z-octadecenoyl)-glycerol = 1,2,3-tri-(9Z-octadecenoyl)-glycerol + glycerol. The enzyme catalyses 1-(9Z-octadecenoyl)-glycerol + 1,2-di-(9Z-octadecenoyl)-glycerol = 1,2,3-tri-(9Z-octadecenoyl)-glycerol + glycerol. It catalyses the reaction 2 1-(9Z-octadecenoyl)-glycerol = 1,2-di-(9Z-octadecenoyl)-glycerol + glycerol. The catalysed reaction is 1,2,3-tri-(9Z-octadecenoyl)-glycerol + all-trans-retinol = all-trans-retinyl 9Z-octadecenoate + di-(9Z)-octadecenoylglycerol. It carries out the reaction 1,2,3-tri-(9Z)-hexadecenoylglycerol + H2O = 1,3-di-(9Z)-hexadecenoylglycerol + (9Z)-hexadecenoate + H(+). The enzyme catalyses 1,2,3-tri-(9Z,12Z)-octadecadienoylglycerol + H2O = 1,3-di-(9Z,12Z)-octadecadienoylglycerol + (9Z,12Z)-octadecadienoate + H(+). It catalyses the reaction 1,2,3-tri-(9Z,12Z,15Z)-octadecatrienoylglycerol + H2O = 1,3-di-(9Z,12Z,15Z)-octadecatrienoylglycerol + (9Z,12Z,15Z)-octadecatrienoate + H(+). The catalysed reaction is 1,3-di-(9Z)-octadecenoyl-2-hexadecanoylglycerol + H2O = 1,3-di-(9Z-octadecenoyl)-glycerol + hexadecanoate + H(+). It carries out the reaction 1,2-di-(9Z)-octadecenoyl-3-hexadecanoyl-sn-glycerol + H2O = 1-(9Z)-octadecenoyl-3-hexadecanoyl-sn-glycerol + (9Z)-octadecenoate + H(+). The enzyme catalyses 1-hexadecanoyl-2,3-di-(9Z)-octadecenoyl-sn-glycerol + H2O = 1-hexadecanoyl-3-(9Z)-octadecenoyl-sn-glycerol + (9Z)-octadecenoate + H(+). It catalyses the reaction 1,2,3-tri-(9Z-octadecenoyl)-glycerol + H2O = 2,3-di-(9Z)-octadecenoyl-sn-glycerol + (9Z)-octadecenoate + H(+). The catalysed reaction is 1,2,3-tri-(9Z)-hexadecenoylglycerol + H2O = 2,3-di-(9Z)-hexadecenoyl-sn-glycerol + (9Z)-hexadecenoate + H(+). It carries out the reaction 1,2,3-tri-(9Z,12Z)-octadecadienoylglycerol + H2O = 2,3-di-(9Z,12Z)-octadecadienoyl-sn-glycerol + (9Z,12Z)-octadecadienoate + H(+). The enzyme catalyses 1,2,3-tri-(9Z,12Z,15Z)-octadecatrienoylglycerol + H2O = 2,3-di-(9Z,12Z,15Z)-octadecatrienoyl-sn-glycerol + (9Z,12Z,15Z)-octadecatrienoate + H(+). It catalyses the reaction 1,3-di-(9Z)-octadecenoyl-2-hexadecanoylglycerol + H2O = 2-hexadecanoyl-3-(9Z)-octadecenoyl-sn-glycerol + (9Z)-octadecenoate + H(+). The catalysed reaction is 1-hexadecanoyl-2,3-di-(9Z)-octadecenoyl-sn-glycerol + H2O = 2,3-di-(9Z)-octadecenoyl-sn-glycerol + hexadecanoate + H(+). It carries out the reaction 1,2-di-(9Z)-octadecenoyl-3-hexadecanoyl-sn-glycerol + H2O = 2-(9Z-octadecenoyl)-3-hexadecanoyl-sn-glycerol + (9Z)-octadecenoate + H(+). The enzyme catalyses a 1,2-diacyl-sn-glycero-3-phosphocholine + H2O = a 1-acyl-sn-glycero-3-phosphocholine + a fatty acid + H(+). It catalyses the reaction 1,2,3-tri-(9Z-octadecenoyl)-glycerol + 9-hydroxy-octadecanoate = 9-(9Z-octadecenoyloxy)-octadecanoate + 2,3-di-(9Z)-octadecenoyl-sn-glycerol. The catalysed reaction is 1-hexadecanoyl-2,3-di-(9Z)-octadecenoyl-sn-glycerol + 9-hydroxy-octadecanoate = 9-hexadecanoyloxy-octadecanoate + 2,3-di-(9Z)-octadecenoyl-sn-glycerol. It carries out the reaction 1,2,3-tri-(10Z)-heptadecenoylglycerol + 9-hydroxy-octadecanoate = 2,3-di-(10Z-heptadecenoyl)-sn-glycerol + 9-(10Z-heptadecenoyloxy)-octadecanoate. The enzyme catalyses 1,2,3-tri-(9Z,12Z)-octadecadienoylglycerol + 9-hydroxy-octadecanoate = 2,3-di-(9Z,12Z)-octadecadienoyl-sn-glycerol + 9-(9Z,12Z-octadecadienoyloxy)-octadecanoate. It catalyses the reaction 1,2,3-tri-(9Z)-hexadecenoylglycerol + 9-hydroxy-octadecanoate = 2,3-di-(9Z)-hexadecenoyl-sn-glycerol + 9-(9Z-hexadecenoyloxy)-octadecanoate. The catalysed reaction is 9-hydroxy-octadecanoate + 1,2-di-(9Z-octadecenoyl)-sn-glycerol = 9-(9Z-octadecenoyloxy)-octadecanoate + 2-(9Z-octadecenoyl)-glycerol. It carries out the reaction 1-hexadecanoyl-2,3-di-(9Z)-octadecenoyl-sn-glycerol + 9-hydroxy-octadecanoate = 1-hexadecanoyl-3-(9Z)-octadecenoyl-sn-glycerol + 9-(9Z-octadecenoyloxy)-octadecanoate. The protein operates within glycerolipid metabolism; triacylglycerol degradation. Catalyzes the initial step in triglyceride hydrolysis in adipocyte and non-adipocyte lipid droplets. Exhibits a strong preference for the hydrolysis of long-chain fatty acid esters at the sn-2 position of the glycerol backbone and acts coordinately with LIPE/HLS and DGAT2 within the lipolytic cascade. Also possesses acylglycerol transacylase and phospholipase A2 activities. Transfers fatty acid from triglyceride to retinol, hydrolyzes retinylesters, and generates 1,3-diacylglycerol from triglycerides. Regulates adiposome size and may be involved in the degradation of adiposomes. Catalyzes the formation of an ester bond between hydroxy fatty acids and fatty acids derived from triglycerides or diglycerides to generate fatty acid esters of hydroxy fatty acids (FAHFAs) in adipocytes. Acts antagonistically with LDAH in regulation of cellular lipid stores. Inhibits LDAH-stimulated lipid droplet fusion. May play an important role in energy homeostasis. May play a role in the response of the organism to starvation, enhancing hydrolysis of triglycerides and providing free fatty acids to other tissues to be oxidized in situations of energy depletion. In Bos taurus (Bovine), this protein is Patatin-like phospholipase domain-containing protein 2 (PNPLA2).